A 269-amino-acid chain; its full sequence is JmjC domain-containing protein 8 (269 aa).

The signal sequence occupies residues 1–24; it reads MAAAGRFGLLLLIVLWTMVTVVLP. Residues N135, N145, and N214 are each glycosylated (N-linked (GlcNAc...) asparagine). One can recognise a JmjC domain in the interval 147–269; that stretch reads TEWAPLFQHY…TSVFISTFLG (123 aa).

As to quaternary structure, oligomer. Dimer. Interacts with PKM; regulates angiogenesis and metabolism. In terms of processing, N-glycosylated.

It is found in the endoplasmic reticulum lumen. Its subcellular location is the cytoplasm. In terms of biological role, functions as a positive regulator of TNF-induced NF-kappaB signaling. Regulates angiogenesis and cellular metabolism through interaction with PKM. This Rattus norvegicus (Rat) protein is JmjC domain-containing protein 8.